The following is a 352-amino-acid chain: Photosystem II protein D1 (352 aa).

An N-acetylthreonine modification is found at T2. Phosphothreonine is present on T2. 3 consecutive transmembrane segments (helical) span residues 29–46, 118–133, and 142–156; these read YIGWFGVIMIPTLLTATS, HFLLGVCCYMGREWEL, and WIAVAYSAPVAAATA. H118 is a binding site for chlorophyll a. Y126 is a pheophytin a binding site. D170 and E189 together coordinate [CaMn4O5] cluster. A helical membrane pass occupies residues 197 to 218; that stretch reads FHMLGVAGVFGGSLFSAMHGSL. Chlorophyll a is bound at residue H198. Residues H215 and 264 to 265 contribute to the a quinone site; that span reads SF. H215 contributes to the Fe cation binding site. H272 is a binding site for Fe cation. The helical transmembrane segment at 274-288 threads the bilayer; sequence FLAAWPVVGIWFTAL. 4 residues coordinate [CaMn4O5] cluster: H332, E333, D342, and A344. Residues 345 to 352 constitute a propeptide that is removed on maturation; the sequence is SVEAPVVG.

This sequence belongs to the reaction center PufL/M/PsbA/D family. PSII is composed of 1 copy each of membrane proteins PsbA, PsbB, PsbC, PsbD, PsbE, PsbF, PsbH, PsbI, PsbJ, PsbK, PsbL, PsbM, PsbT, PsbX, PsbY, PsbZ, Psb30/Ycf12, at least 3 peripheral proteins of the oxygen-evolving complex and a large number of cofactors. It forms dimeric complexes. The D1/D2 heterodimer binds P680, chlorophylls that are the primary electron donor of PSII, and subsequent electron acceptors. It shares a non-heme iron and each subunit binds pheophytin, quinone, additional chlorophylls, carotenoids and lipids. D1 provides most of the ligands for the Mn4-Ca-O5 cluster of the oxygen-evolving complex (OEC). There is also a Cl(-1) ion associated with D1 and D2, which is required for oxygen evolution. The PSII complex binds additional chlorophylls, carotenoids and specific lipids. serves as cofactor. Tyr-161 forms a radical intermediate that is referred to as redox-active TyrZ, YZ or Y-Z. Post-translationally, C-terminally processed by CTPA; processing is essential to allow assembly of the oxygen-evolving complex and thus photosynthetic growth.

The protein localises to the plastid. It localises to the chloroplast thylakoid membrane. It carries out the reaction 2 a plastoquinone + 4 hnu + 2 H2O = 2 a plastoquinol + O2. Its function is as follows. Photosystem II (PSII) is a light-driven water:plastoquinone oxidoreductase that uses light energy to abstract electrons from H(2)O, generating O(2) and a proton gradient subsequently used for ATP formation. It consists of a core antenna complex that captures photons, and an electron transfer chain that converts photonic excitation into a charge separation. The D1/D2 (PsbA/PsbD) reaction center heterodimer binds P680, the primary electron donor of PSII as well as several subsequent electron acceptors. This is Photosystem II protein D1 from Zygnema circumcarinatum (Green alga).